The following is a 208-amino-acid chain: Imidazole glycerol phosphate synthase subunit HisH (208 aa).

Residues 1-206 (MIVIIDYDTG…KEVTESCKSS (206 aa)) enclose the Glutamine amidotransferase type-1 domain. The Nucleophile role is filled by C79. Catalysis depends on residues H181 and E183.

In terms of assembly, heterodimer of HisH and HisF.

The protein resides in the cytoplasm. It catalyses the reaction 5-[(5-phospho-1-deoxy-D-ribulos-1-ylimino)methylamino]-1-(5-phospho-beta-D-ribosyl)imidazole-4-carboxamide + L-glutamine = D-erythro-1-(imidazol-4-yl)glycerol 3-phosphate + 5-amino-1-(5-phospho-beta-D-ribosyl)imidazole-4-carboxamide + L-glutamate + H(+). It carries out the reaction L-glutamine + H2O = L-glutamate + NH4(+). It functions in the pathway amino-acid biosynthesis; L-histidine biosynthesis; L-histidine from 5-phospho-alpha-D-ribose 1-diphosphate: step 5/9. In terms of biological role, IGPS catalyzes the conversion of PRFAR and glutamine to IGP, AICAR and glutamate. The HisH subunit catalyzes the hydrolysis of glutamine to glutamate and ammonia as part of the synthesis of IGP and AICAR. The resulting ammonia molecule is channeled to the active site of HisF. The protein is Imidazole glycerol phosphate synthase subunit HisH of Listeria innocua serovar 6a (strain ATCC BAA-680 / CLIP 11262).